Here is a 484-residue protein sequence, read N- to C-terminus: Glutamate--tRNA ligase (484 aa).

Residues 11-21 carry the 'HIGH' region motif; that stretch reads PSPTGLLHIGN. A 'KMSKS' region motif is present at residues 255-259; that stretch reads KLSKR. Residue K258 coordinates ATP.

This sequence belongs to the class-I aminoacyl-tRNA synthetase family. Glutamate--tRNA ligase type 1 subfamily. As to quaternary structure, monomer.

It is found in the cytoplasm. It catalyses the reaction tRNA(Glu) + L-glutamate + ATP = L-glutamyl-tRNA(Glu) + AMP + diphosphate. Functionally, catalyzes the attachment of glutamate to tRNA(Glu) in a two-step reaction: glutamate is first activated by ATP to form Glu-AMP and then transferred to the acceptor end of tRNA(Glu). The sequence is that of Glutamate--tRNA ligase from Streptococcus agalactiae serotype Ia (strain ATCC 27591 / A909 / CDC SS700).